Here is a 328-residue protein sequence, read N- to C-terminus: CCAAT/enhancer-binding protein beta (328 aa).

Asymmetric dimethylarginine; by CARM1 is present on R3. K39 carries the post-translational modification N6-methylated lysine. Residues 165–274 (DSCKGPRKEE…NIAVRKSRDK (110 aa)) form a disordered region. Residues 200 to 231 (SVPSGSSGNLSTSSSSSPPGTPNPSESSKSAA) are compositionally biased toward low complexity. T220 carries the post-translational modification Phosphothreonine; by RPS6KA1, CDK2 and MAPK. A compositionally biased stretch (basic and acidic residues) spans 248–264 (KCVDKHSDEYKLRRERN). In terms of domain architecture, bZIP spans 254–317 (SDEYKLRRER…STLRNLFKQL (64 aa)). A basic motif region spans residues 258–278 (KLRRERNNIAVRKSRDKAKMR). A leucine-zipper region spans residues 280-287 (LETQHKVL).

This sequence belongs to the bZIP family. C/EBP subfamily. As to quaternary structure, binds DNA as a dimer. Interacts (not methylated) with MED23, MED26, SMARCA2, SMARCB1 and SMARCC1. Methylated. Methylation at Arg-3 by CARM1 and at Lys-39 by EHMT2, inhibit transactivation activity. Methylation is probably inhibited by phosphorylation at Thr-220. In terms of tissue distribution, specifically expressed in myelomoncytic cells.

It localises to the nucleus. Functionally, important transcriptional activator regulating the expression of genes involved in immune and inflammatory responses. Binds to regulatory regions of several acute-phase and cytokines genes and probably plays a role in the regulation of acute-phase reaction, inflammation and hemopoiesis. The consensus recognition site is 5'-T[TG]NNGNAA[TG]-3'. Functions in brown adipose tissue (BAT) differentiation. Regulates the transcriptional induction of peroxisome proliferator-activated receptor gamma (PPARG). Binds to the MGF and MIM-1 promoters and activates the transcription of these genes. Important transcription factor regulating the expression of genes involved in immune and inflammatory responses. Also plays a significant role in adipogenesis, as well as in the gluconeogenic pathway, liver regeneration, and hematopoiesis. The consensus recognition site is 5'-T[TG]NNGNAA[TG]-3'. Its functional capacity is governed by protein interactions and post-translational protein modifications. This Gallus gallus (Chicken) protein is CCAAT/enhancer-binding protein beta (CEBPB).